The chain runs to 263 residues: Purine nucleoside phosphorylase SAV1187 (263 aa).

Residues His79, Cys124, and His141 each coordinate Zn(2+).

It belongs to the purine nucleoside phosphorylase YfiH/LACC1 family. In terms of assembly, homodimer. Cu(2+) is required as a cofactor. Zn(2+) serves as cofactor.

It carries out the reaction adenosine + phosphate = alpha-D-ribose 1-phosphate + adenine. The catalysed reaction is S-methyl-5'-thioadenosine + phosphate = 5-(methylsulfanyl)-alpha-D-ribose 1-phosphate + adenine. It catalyses the reaction inosine + phosphate = alpha-D-ribose 1-phosphate + hypoxanthine. The enzyme catalyses adenosine + H2O + H(+) = inosine + NH4(+). Purine nucleoside enzyme that catalyzes the phosphorolysis of adenosine and inosine nucleosides, yielding D-ribose 1-phosphate and the respective free bases, adenine and hypoxanthine. Also catalyzes the phosphorolysis of S-methyl-5'-thioadenosine into adenine and S-methyl-5-thio-alpha-D-ribose 1-phosphate. Also has adenosine deaminase activity. The sequence is that of Purine nucleoside phosphorylase SAV1187 from Staphylococcus aureus (strain Mu50 / ATCC 700699).